Here is a 167-residue protein sequence, read N- to C-terminus: Small ribosomal subunit protein uS3m (167 aa).

Residues 1–35 (MAASVCSGLLGPRVLSWSRELPCAWRALHTSPVCA) constitute a mitochondrion transit peptide.

This sequence belongs to the universal ribosomal protein uS3 family. As to quaternary structure, component of the mitochondrial small ribosomal subunit (mt-SSU). Mature mammalian 55S mitochondrial ribosomes consist of a small (28S) and a large (39S) subunit. The 28S small subunit contains a 12S ribosomal RNA (12S mt-rRNA) and 30 different proteins. The 39S large subunit contains a 16S rRNA (16S mt-rRNA), a copy of mitochondrial valine transfer RNA (mt-tRNA(Val)), which plays an integral structural role, and 52 different proteins.

The protein resides in the mitochondrion. The protein is Small ribosomal subunit protein uS3m (MRPS24) of Homo sapiens (Human).